A 477-amino-acid polypeptide reads, in one-letter code: Cysteine--tRNA ligase (477 aa).

Cys-28 is a Zn(2+) binding site. The 'HIGH' region motif lies at 30–40 (PTVYDYAHIGN). 3 residues coordinate Zn(2+): Cys-213, His-238, and Glu-242. Residues 270–274 (KMSKS) carry the 'KMSKS' region motif. Lys-273 lines the ATP pocket.

The protein belongs to the class-I aminoacyl-tRNA synthetase family. As to quaternary structure, monomer. The cofactor is Zn(2+).

It is found in the cytoplasm. The catalysed reaction is tRNA(Cys) + L-cysteine + ATP = L-cysteinyl-tRNA(Cys) + AMP + diphosphate. In Chlamydia trachomatis serovar D (strain ATCC VR-885 / DSM 19411 / UW-3/Cx), this protein is Cysteine--tRNA ligase (cysS).